A 37-amino-acid chain; its full sequence is Large ribosomal subunit protein bL36c (37 aa).

Belongs to the bacterial ribosomal protein bL36 family.

The protein resides in the plastid. The polypeptide is Large ribosomal subunit protein bL36c (Aneura mirabilis (Parasitic liverwort)).